Reading from the N-terminus, the 468-residue chain is Zinc-regulated transporter 1 (468 aa).

Positions M1 to T17 are cleaved as a signal peptide. Topologically, residues E18–R185 are extracellular. N-linked (GlcNAc...) asparagine glycans are attached at residues N57 and N67. A helical transmembrane segment spans residues I186 to L206. Residues K207–Y217 lie on the Cytoplasmic side of the membrane. A helical membrane pass occupies residues I218–L238. Residues M239–G257 lie on the Extracellular side of the membrane. Residues T258–L278 traverse the membrane as a helical segment. Over R279–S314 the chain is Cytoplasmic. The chain crosses the membrane as a helical span at residues V315–V335. Residues T336–D338 lie on the Extracellular side of the membrane. The helical transmembrane segment at V339 to L359 threads the bilayer. Over S360 to K374 the chain is Cytoplasmic. The helical transmembrane segment at L375–V395 threads the bilayer. The Extracellular segment spans residues L396 to T406. The chain crosses the membrane as a helical span at residues L407–I427. At E428–T447 the chain is on the cytoplasmic side. The chain crosses the membrane as a helical span at residues T448–A468.

This sequence belongs to the ZIP transporter (TC 2.A.5) family.

It is found in the cell membrane. The enzyme catalyses Zn(2+)(in) = Zn(2+)(out). Functionally, zinc transporter that acts with PRA1 in sequestration of zinc from host tissues during infection. The pH-regulated antigen 1 (PRA1) binds zinc from its environment and then reassociates with ZRT1 to acquire this essential metal. This chain is Zinc-regulated transporter 1 (ZRT101), found in Candida albicans (strain SC5314 / ATCC MYA-2876) (Yeast).